The primary structure comprises 295 residues: Nicotinate-nucleotide pyrophosphorylase [carboxylating] (295 aa).

Residues arginine 107, 142 to 144, arginine 166, lysine 176, glutamate 206, aspartate 227, and 256 to 258 each bind substrate; these read TRK and SGG.

The protein belongs to the NadC/ModD family. Hexamer formed by 3 homodimers.

It localises to the cytoplasm. Its subcellular location is the nucleus. The enzyme catalyses nicotinate beta-D-ribonucleotide + CO2 + diphosphate = quinolinate + 5-phospho-alpha-D-ribose 1-diphosphate + 2 H(+). It participates in cofactor biosynthesis; NAD(+) biosynthesis; nicotinate D-ribonucleotide from quinolinate: step 1/1. Involved in the catabolism of quinolinic acid (QA). In Saccharomyces cerevisiae (strain ATCC 204508 / S288c) (Baker's yeast), this protein is Nicotinate-nucleotide pyrophosphorylase [carboxylating] (BNA6).